A 219-amino-acid chain; its full sequence is Sporamin A (219 aa).

Residues 1 to 23 form the signal peptide; sequence MKALTLALFLALSLYLLPNPAHS.

It belongs to the protease inhibitor I3 (leguminous Kunitz-type inhibitor) family. As to expression, accumulates specifically in tuberous roots and tubers upon tuberization. Sporamin accounts 60 to 80% of the total soluble protein of the organ.

It localises to the vacuole. Its function is as follows. Major tuberous root protein. The protein is Sporamin A (GSPO-A1) of Ipomoea batatas (Sweet potato).